Here is a 447-residue protein sequence, read N- to C-terminus: Nuclear envelope integral membrane protein 2 (447 aa).

An N-terminal signal peptide occupies residues 1-28 (MGPRRLPWARPGPALGLLLLALAGAVPA). 5 helical membrane-spanning segments follow: residues 144–164 (EMLD…FHFA), 173–193 (FFYL…VLLA), 202–222 (STFW…IYCF), 235–255 (IYVL…CYQH), and 275–295 (AFVF…IIAV). Residues 410–438 (TRTESEQDETTSYIHEGDDENEDEIHEPI) form a disordered region.

It belongs to the NEMP family.

The protein resides in the nucleus inner membrane. In Gallus gallus (Chicken), this protein is Nuclear envelope integral membrane protein 2 (NEMP2).